Consider the following 134-residue polypeptide: RxLR effector protein Avh238 (134 aa).

The N-terminal stretch at 1-21 (MRGVFFVAVAVAIFARSSAEA) is a signal peptide. Positions 44–68 (RFLRVADPEDDDLAAPADDGKTEER) match the RxLR-dEER motif. A disordered region spans residues 49–70 (ADPEDDDLAAPADDGKTEERAP). Residues 61-70 (DDGKTEERAP) are compositionally biased toward basic and acidic residues.

The protein belongs to the RxLR effector family. As to quaternary structure, interacts with host 1-aminocyclopropane-1-carboxylate synthases ACS1, ACS2, ACS3, ACS10 and ACS12.

The protein localises to the secreted. It is found in the host cytoplasm. It localises to the host nucleus. Its function is as follows. Effector that suppresses plant defense responses during the early stages of pathogen infection. Suppresses cell death induced by effectors and PAMPs in plant hosts. Is able to induced cell death in tomato, tobacco, eggplant, and potato, but not in A.thaliana. Interacts with and destabilizes host 1-aminocyclopropane-1-carboxylate synthases. By suppressing type2 ACS-catalyzed ethylene biosynthesis, Avh238 facilitates Phytophthora infection. This chain is RxLR effector protein Avh238 (Avh238), found in Phytophthora sojae (strain P6497) (Soybean stem and root rot agent).